The sequence spans 469 residues: COP9 signalosome complex subunit 5 (469 aa).

The 138-residue stretch at 63 to 200 (TYISSLALCK…IGAFRTFPDN (138 aa)) folds into the MPN domain. Zn(2+) contacts are provided by His146, His148, and Asp159. The JAMM motif motif lies at 146-159 (HSHPGYGCWLSGID). 2 disordered regions span residues 201 to 220 (YKSP…PPSK) and 331 to 404 (YDSF…KRPM). A compositionally biased stretch (acidic residues) spans 344-353 (DEMDDESDLD).

This sequence belongs to the peptidase M67A family. CSN5 subfamily. In terms of assembly, component of the COP9 signalosome (CSN) complex.

It localises to the cytoplasm. The protein resides in the nucleus. Catalytic Component of the COP9 signalosome (CSN) complex that acts as an regulator of the ubiquitin (Ubl) conjugation pathway by mediating the deneddylation of the cullin subunit of SCF-type E3 ubiquitin-protein ligase complexes. The CSN complex is involved in the regulation of the mating pheromone response. This Debaryomyces hansenii (strain ATCC 36239 / CBS 767 / BCRC 21394 / JCM 1990 / NBRC 0083 / IGC 2968) (Yeast) protein is COP9 signalosome complex subunit 5 (RRI1).